The chain runs to 1728 residues: Lysophospholipase NTE1 (1728 aa).

Residues 1 to 44 (MDSSSIAHESDIVSTERNILPERFISNKQQGNYLEDGSGDGNGK) lie on the Cytoplasmic side of the membrane. A helical transmembrane segment spans residues 45–65 (AAEHWLLAAIFNFFWVISYFI). Residues 66 to 97 (SGSTHIAFRSSWYIVSLLLLKFPKWIIVEANH) are Lumenal-facing. The chain crosses the membrane as a helical span at residues 98-118 (IHLTIPFSVLVVTLAIIFYVS). Topologically, residues 119–1728 (YEFLKGRLLS…GFFLHRRNSI (1610 aa)) are cytoplasmic. The segment covering 141–150 (SLNSKNSKSS) has biased composition (low complexity). Disordered stretches follow at residues 141 to 167 (SLNS…RRRR), 285 to 368 (RKKK…DEST), 406 to 436 (NDNV…LSTS), 454 to 488 (TEAS…VTTP), 596 to 660 (NLQK…TGSR), and 687 to 756 (ASPS…FTSF). Positions 153–162 (LHHDSKDSNT) are enriched in basic and acidic residues. 2 stretches are compositionally biased toward polar residues: residues 293-303 (SRHGQYNNNSD) and 326-336 (MRSSSRNQNIP). Residues 345–367 (SSDEESDINDGDSESQSESDDES) are compositionally biased toward acidic residues. Polar residues-rich tracts occupy residues 406-424 (NDNV…NYTN), 454-479 (TEAS…SKSI), and 599-609 (KGFQSPTSSRL). The span at 610–628 (TSNFNGNSNNQRTNSRNSQ) shows a compositional bias: low complexity. 2 stretches are compositionally biased toward polar residues: residues 642–657 (ELSQ…TPIT) and 729–756 (IYNN…FTSF). Residues 854-987 (SPTL…LTSL) and 983-1121 (SLTS…VAKK) contribute to the a nucleoside 3',5'-cyclic phosphate site. Residues 1034–1055 (PELEENSTDYPNDGEEKDSSRD) form a disordered region. The segment covering 1036–1049 (LEENSTDYPNDGEE) has biased composition (acidic residues). The PNPLA domain maps to 1422 to 1586 (LVLGGGGARG…VDNLPVLEMK (165 aa)). Positions 1426 to 1431 (GGGARG) match the GXGXXG motif. The short motif at 1453–1457 (GTSIG) is the GXSXG element. Ser-1455 acts as the Nucleophile in catalysis. Asp-1573 serves as the catalytic Proton acceptor. The DGA/G motif lies at 1573–1575 (DGG).

It belongs to the NTE family.

It localises to the endoplasmic reticulum membrane. The enzyme catalyses a 1-acyl-sn-glycero-3-phosphocholine + H2O = sn-glycerol 3-phosphocholine + a fatty acid + H(+). Inhibited by organophosphorus esters. Its function is as follows. Intracellular phospholipase B that catalyzes the double deacylation of phosphatidylcholine (PC) to glycerophosphocholine (GroPCho). Plays an important role in membrane lipid homeostasis. Responsible for the rapid PC turnover in response to inositol, elevated temperatures, or when choline is present in the growth medium. The sequence is that of Lysophospholipase NTE1 (NTE1) from Candida glabrata (strain ATCC 2001 / BCRC 20586 / JCM 3761 / NBRC 0622 / NRRL Y-65 / CBS 138) (Yeast).